We begin with the raw amino-acid sequence, 183 residues long: MSRFKISLPALATRVAVLGFLTLMASVLGGCGAGQISQTATQEPAVNGNRVTLNNLALRDIRIQAAQTGDFLQSGRTVDLMLVAINNSPYVTDRLVSITSDIGTVALNGYTQLPTNGMLFIGTSEGQRIKPPPLQSNNIAKAIVTLAKPITNGLTYNFTFNFEKAGQANVAVPVSAGLAPRQT.

Positions 1 to 30 are cleaved as a signal peptide; that stretch reads MSRFKISLPALATRVAVLGFLTLMASVLGG. A lipid anchor (N-palmitoyl cysteine) is attached at Cys-31. Residue Cys-31 is the site of S-diacylglycerol cysteine attachment.

Its subcellular location is the cell membrane. The chain is Putative lipoprotein LpqE (lpqE) from Mycobacterium leprae (strain TN).